Reading from the N-terminus, the 150-residue chain is 3-dehydroquinate dehydratase (150 aa).

Tyrosine 23 functions as the Proton acceptor in the catalytic mechanism. 3 residues coordinate substrate: asparagine 79, histidine 85, and aspartate 92. The active-site Proton donor is the histidine 105. Substrate is bound by residues 106 to 107 (IS) and arginine 116.

The protein belongs to the type-II 3-dehydroquinase family. In terms of assembly, homododecamer.

The catalysed reaction is 3-dehydroquinate = 3-dehydroshikimate + H2O. It participates in metabolic intermediate biosynthesis; chorismate biosynthesis; chorismate from D-erythrose 4-phosphate and phosphoenolpyruvate: step 3/7. Functionally, catalyzes a trans-dehydration via an enolate intermediate. The protein is 3-dehydroquinate dehydratase of Marinomonas sp. (strain MWYL1).